Reading from the N-terminus, the 219-residue chain is Interleukin-12 subunit alpha (219 aa).

The first 22 residues, 1–22 (MCPARSLLLVATLVLLDYLSLA), serve as a signal peptide directing secretion. Asn-24 and Asn-93 each carry an N-linked (GlcNAc...) asparagine glycan. 3 cysteine pairs are disulfide-bonded: Cys-37/Cys-110, Cys-64/Cys-196, and Cys-85/Cys-123.

Belongs to the IL-6 superfamily. As to quaternary structure, heterodimer with IL12B; disulfide-linked. This heterodimer is known as interleukin IL-12. Heterodimer with EBI3/IL27B; not disulfide-linked. This heterodimer is known as interleukin IL-35. Interacts with NBR1; this interaction promotes IL-12 secretion.

The protein localises to the secreted. In terms of biological role, heterodimerizes with IL12B to form the IL-12 cytokine or with EBI3/IL27B to form the IL-35 cytokine. IL-12 is primarily produced by professional antigen-presenting cells (APCs) such as B-cells and dendritic cells (DCs) as well as macrophages and granulocytes and regulates T-cell and natural killer-cell responses, induces the production of interferon-gamma (IFN-gamma), favors the differentiation of T-helper 1 (Th1) cells and is an important link between innate resistance and adaptive immunity. Mechanistically, exerts its biological effects through a receptor composed of IL12R1 and IL12R2 subunits. Binding to the receptor results in the rapid tyrosine phosphorylation of a number of cellular substrates including the JAK family kinases TYK2 and JAK2. In turn, recruited STAT4 gets phosphorylated and translocates to the nucleus where it regulates cytokine/growth factor responsive genes. As part of IL-35, plays essential roles in maintaining the immune homeostasis of the liver microenvironment and also functions as an immune-suppressive cytokine. Mediates biological events through unconventional receptors composed of IL12RB2 and gp130/IL6ST heterodimers or homodimers. Signaling requires the transcription factors STAT1 and STAT4, which form a unique heterodimer that binds to distinct DNA sites. The polypeptide is Interleukin-12 subunit alpha (IL12A) (Papio anubis (Olive baboon)).